Consider the following 266-residue polypeptide: Chymotrypsin-like elastase family member 1 (266 aa).

A signal peptide spans 1-16 (MLRFLVFASLVLYGHS). Residues 17 to 26 (TQDFPETNAR) constitute a propeptide, activation peptide. Positions 27–264 (VVGGAEARRN…YISWMNNVIA (238 aa)) constitute a Peptidase S1 domain. Cysteine 56 and cysteine 72 are oxidised to a cystine. Histidine 71 serves as the catalytic Charge relay system. Ca(2+) contacts are provided by aspartate 85, asparagine 87, glutamine 90, and glutamate 95. Aspartate 119 (charge relay system) is an active-site residue. 3 cysteine pairs are disulfide-bonded: cysteine 153/cysteine 220, cysteine 184/cysteine 200, and cysteine 210/cysteine 240. The active-site Charge relay system is serine 214.

The protein belongs to the peptidase S1 family. Elastase subfamily. It depends on Ca(2+) as a cofactor. In terms of tissue distribution, pancreas.

The protein localises to the secreted. The catalysed reaction is Hydrolysis of proteins, including elastin. Preferential cleavage: Ala-|-Xaa.. Serine proteases that hydrolyze many proteins in addition to elastin. This chain is Chymotrypsin-like elastase family member 1 (Cela1), found in Rattus norvegicus (Rat).